Here is a 251-residue protein sequence, read N- to C-terminus: Ribosomal RNA small subunit methyltransferase J (251 aa).

S-adenosyl-L-methionine is bound by residues 100-101 (RD), 116-117 (ER), and Asp170.

This sequence belongs to the methyltransferase superfamily. RsmJ family.

It localises to the cytoplasm. It carries out the reaction guanosine(1516) in 16S rRNA + S-adenosyl-L-methionine = N(2)-methylguanosine(1516) in 16S rRNA + S-adenosyl-L-homocysteine + H(+). In terms of biological role, specifically methylates the guanosine in position 1516 of 16S rRNA. The polypeptide is Ribosomal RNA small subunit methyltransferase J (Actinobacillus pleuropneumoniae serotype 5b (strain L20)).